The primary structure comprises 199 residues: Protein-methionine-sulfoxide reductase heme-binding subunit MsrQ (199 aa).

A run of 4 helical transmembrane segments spans residues 10–30 (WLKV…FWAI), 82–102 (LWCF…ELGI), 116–136 (PYLT…LTST), and 153–173 (VVYL…KILS).

This sequence belongs to the MsrQ family. Heterodimer of a catalytic subunit (MsrP) and a heme-binding subunit (MsrQ). FMN serves as cofactor. Requires heme b as cofactor.

The protein localises to the cell inner membrane. Part of the MsrPQ system that repairs oxidized periplasmic proteins containing methionine sulfoxide residues (Met-O), using respiratory chain electrons. Thus protects these proteins from oxidative-stress damage caused by reactive species of oxygen and chlorine generated by the host defense mechanisms. MsrPQ is essential for the maintenance of envelope integrity under bleach stress, rescuing a wide series of structurally unrelated periplasmic proteins from methionine oxidation, including the primary periplasmic chaperone SurA and the lipoprotein Pal. MsrQ provides electrons for reduction to the reductase catalytic subunit MsrP, using the quinone pool of the respiratory chain. This is Protein-methionine-sulfoxide reductase heme-binding subunit MsrQ from Salmonella enteritidis PT4 (strain P125109).